The sequence spans 122 residues: Large ribosomal subunit protein uL14 (122 aa).

It belongs to the universal ribosomal protein uL14 family. In terms of assembly, part of the 50S ribosomal subunit. Forms a cluster with proteins L3 and L19. In the 70S ribosome, L14 and L19 interact and together make contacts with the 16S rRNA in bridges B5 and B8.

Functionally, binds to 23S rRNA. Forms part of two intersubunit bridges in the 70S ribosome. The polypeptide is Large ribosomal subunit protein uL14 (Staphylococcus haemolyticus (strain JCSC1435)).